An 820-amino-acid chain; its full sequence is Disintegrin and metalloproteinase domain-containing protein 29 (820 aa).

A signal peptide spans 1–18 (MKMLLLLHCLGVFLSCSG). A propeptide spanning residues 19-193 (HIQDEHPQYH…TQKQSSYVGW (175 aa)) is cleaved from the precursor. Topologically, residues 194–674 (WIHFRIVEIV…GPPPKRKKKK (481 aa)) are extracellular. One can recognise a Peptidase M12B domain in the interval 198–390 (RIVEIVVVID…RTKCLLETVH (193 aa)). 2 N-linked (GlcNAc...) asparagine glycosylation sites follow: Asn217 and Asn320. 3 cysteine pairs are disulfide-bonded: Cys307–Cys384, Cys347–Cys369, and Cys349–Cys354. Residues Asn368, Asn428, Asn469, Asn538, Asn545, Asn558, and Asn564 are each glycosylated (N-linked (GlcNAc...) asparagine). One can recognise a Disintegrin domain in the interval 397-483 (VKRCGNGVVE…KCPDDFYVED (87 aa)). Cysteines 455 and 475 form a disulfide. 3 cysteine pairs are disulfide-bonded: Cys625-Cys636, Cys630-Cys642, and Cys644-Cys653. The EGF-like domain maps to 625 to 654 (CSPAFCNKRGICNNKHHCHCNYLWDPPNCL). Residues 675 to 695 (KFCYLCILLLIVLFILLCCLY) traverse the membrane as a helical segment. The Cytoplasmic portion of the chain corresponds to 696–820 (RLCKKSKPIK…SQSQPPVTPS (125 aa)). A disordered region spans residues 706–820 (KQQDVQTPSA…SQSQPPVTPS (115 aa)). The span at 715-727 (AKEEEKIQRRPHE) shows a compositional bias: basic and acidic residues. Residues 738-820 (PSQSQPPVTP…SQSQPPVTPS (83 aa)) are compositionally biased toward low complexity. 9 consecutive repeat copies span residues 739–747 (SQSQPPVTP), 748–756 (SQSHPQVMP), 757–765 (SQSQPPVTP), 766–774 (SQSQPRVMP), 775–783 (SQSQPPVMP), 784–792 (SQSHPQLTP), 793–801 (SQSQPPVTP), 802–810 (SQRQPQLMP), and 811–819 (SQSQPPVTP). Residues 739–819 (SQSQPPVTPS…PSQSQPPVTP (81 aa)) are 9 X 9 AA approximate repeats.

In terms of tissue distribution, expressed specifically in testes.

It is found in the membrane. In terms of biological role, may be involved in spermatogenesis and fertilization. Seems to be a non catalytic metalloprotease-like protein. The protein is Disintegrin and metalloproteinase domain-containing protein 29 (ADAM29) of Homo sapiens (Human).